We begin with the raw amino-acid sequence, 308 residues long: Reticulon-like protein 1 (308 aa).

2 stretches are compositionally biased toward polar residues: residues 1–17 (MSEQ…SVTA) and 41–66 (PSTE…IQNI). Disordered stretches follow at residues 1-22 (MSEQ…DVAA) and 41-92 (PSTE…CPVS). An N-linked (GlcNAc...) asparagine glycan is attached at Asn65. The segment covering 67–81 (SSSSSEPHHTSQSTP) has biased composition (low complexity). N-linked (GlcNAc...) asparagine glycosylation is found at Asn113 and Asn135. Residues 127-308 (LWSVLTWKNT…TETINTTVNK (182 aa)) form the Reticulon domain. The next 4 membrane-spanning stretches (helical) occupy residues 138-158 (CSFS…WINL), 166-186 (FRYV…ASNG), 233-253 (PILT…SGFL), and 255-275 (YKSL…LYVC). Asn303 carries an N-linked (GlcNAc...) asparagine glycan.

Interacts with TTS1 and YOP1.

The protein resides in the endoplasmic reticulum membrane. It is found in the nucleus membrane. Its function is as follows. Required for the correct positioning of the cellular division plane by delimiting the actomyosin ring assembly at the cell equator. Overexpression causes cell lysis. In Schizosaccharomyces pombe (strain 972 / ATCC 24843) (Fission yeast), this protein is Reticulon-like protein 1 (rtn1).